The primary structure comprises 128 residues: DNA-directed RNA polymerase subunit omega (128 aa).

Belongs to the RNA polymerase subunit omega family. In terms of assembly, the RNAP catalytic core consists of 2 alpha, 1 beta, 1 beta' and 1 omega subunit. When a sigma factor is associated with the core the holoenzyme is formed, which can initiate transcription.

The catalysed reaction is RNA(n) + a ribonucleoside 5'-triphosphate = RNA(n+1) + diphosphate. Promotes RNA polymerase assembly. Latches the N- and C-terminal regions of the beta' subunit thereby facilitating its interaction with the beta and alpha subunits. In Neorickettsia sennetsu (strain ATCC VR-367 / Miyayama) (Ehrlichia sennetsu), this protein is DNA-directed RNA polymerase subunit omega.